A 63-amino-acid chain; its full sequence is Gallinacin-4 (63 aa).

The first 19 residues, 1 to 19 (MKILCFFIVLLFVAVHGAV), serve as a signal peptide directing secretion. Residues 20–25 (GFSRSP) constitute a propeptide that is removed on maturation. 3 cysteine pairs are disulfide-bonded: C31-C59, C38-C53, and C43-C60.

The protein belongs to the beta-defensin family. In terms of tissue distribution, strong expression in the bone marrow and testis. Widely expressed. Weak expression in the ovarian stroma, but not expressed in the ovarian follicles.

The protein resides in the secreted. It is found in the cytoplasmic granule. In terms of biological role, has bactericidal activity. Potent activity against S.typhimurium and S.entiriditis. The protein is Gallinacin-4 (GAL4) of Gallus gallus (Chicken).